The primary structure comprises 442 residues: 23S rRNA (uracil(1939)-C(5))-methyltransferase RlmD (442 aa).

The TRAM domain maps to 10–75 (AKQTAKNCCK…RQYGRAKANK (66 aa)). 4 residues coordinate [4Fe-4S] cluster: Cys-88, Cys-94, Cys-97, and Cys-173. S-adenosyl-L-methionine contacts are provided by Gln-276, Phe-305, Asn-310, Glu-326, Asn-353, and Asp-374. Cys-400 serves as the catalytic Nucleophile.

Belongs to the class I-like SAM-binding methyltransferase superfamily. RNA M5U methyltransferase family. RlmD subfamily.

The catalysed reaction is uridine(1939) in 23S rRNA + S-adenosyl-L-methionine = 5-methyluridine(1939) in 23S rRNA + S-adenosyl-L-homocysteine + H(+). In terms of biological role, catalyzes the formation of 5-methyl-uridine at position 1939 (m5U1939) in 23S rRNA. The protein is 23S rRNA (uracil(1939)-C(5))-methyltransferase RlmD of Haemophilus ducreyi (strain 35000HP / ATCC 700724).